Consider the following 2472-residue polypeptide: Highly reducing polyketide synthase xilA (2472 aa).

The Ketosynthase family 3 (KS3) domain maps to 1-417; it reads MPGGVRDLPA…GTNGHCIIDD (417 aa). Active-site for beta-ketoacyl synthase activity residues include Cys162, His298, and His340. The tract at residues 442–502 is disordered; sequence NDINGKSGTN…QRKHHHPKTD (61 aa). The span at 450–489 shows a compositional bias: low complexity; that stretch reads TNGANGANRVNGVNGVNGVNGVNGANGHSNASLLSNGSNN. The region spanning 597–932 is the Malonyl-CoA:ACP transacylase (MAT) domain; sequence FIFTGQGAQW…CTGTLFVHNV (336 aa). Positions 991 to 1129 are N-terminal hotdog fold; sequence HDLLGSKVPG…GQIKVEVAKF (139 aa). Residues 991 to 1294 enclose the PKS/mFAS DH domain; it reads HDLLGSKVPG…FTSLNNEQES (304 aa). His1023 (proton acceptor; for dehydratase activity) is an active-site residue. Residues 1141–1294 form a C-terminal hotdog fold region; that stretch reads GRLVDAQTWY…FTSLNNEQES (154 aa). Asp1207 acts as the Proton donor; for dehydratase activity in catalysis. The tract at residues 1289-1505 is methyltransferase (CMeT) domain; sequence NNEQESPSTG…IITVHALRSI (217 aa). One can recognise an Enoyl reductase (ER) domain in the interval 1724 to 2036; sequence GLLTSLYFKP…KGTHIGKMVI (313 aa). One can recognise a Ketoreductase (KR) domain in the interval 2060-2239; sequence ASYILVGGLS…ATTVSLGFIK (180 aa). The Carrier domain maps to 2391 to 2469; sequence ETVKLVSDAI…SIARVIVEEA (79 aa). The residue at position 2428 (Ser2428) is an O-(pantetheine 4'-phosphoryl)serine.

Requires pantetheine 4'-phosphate as cofactor.

Its pathway is secondary metabolite biosynthesis. In terms of biological role, highly reducing polyketide synthase; part of the gene cluster that mediates the biosynthesis of the 6-methyl-2-pyrone derivative xylariolide D. XilA produces the 5-alkyl-6-methyl-2-pyrone backbone called prexylariolide D via sequential condensations of 4 malonyl-CoA units with one acetyl-CoA starter unit. During the biosynthesis, the linear polyketide chain is branched by the addition of an acetyl unit as the origin of the methyl group at the 2-pyrone ring. Prexylariolide D is then hydroxylated at the side chain by xilC to form the final product, xylariolide D. The chain is Highly reducing polyketide synthase xilA from Penicillium crustosum (Blue mold fungus).